Reading from the N-terminus, the 191-residue chain is Protein Ves (191 aa).

This sequence belongs to the Ves family.

The polypeptide is Protein Ves (Escherichia coli (strain SMS-3-5 / SECEC)).